Consider the following 196-residue polypeptide: APGW-amide-related neuropeptide (196 aa).

The signal sequence occupies residues M1 to S22. Residues S23–D48 constitute a propeptide that is removed on maturation. W54 is subject to Tryptophan amide. Residues S58–D68 constitute a propeptide that is removed on maturation. Tryptophan amide is present on W74. A propeptide spanning residues S78–E88 is cleaved from the precursor. Tryptophan amide is present on W94. The propeptide occupies S98–E105. At W111 the chain carries Tryptophan amide. Positions S115–V129 are excised as a propeptide. The residue at position 135 (W135) is a Tryptophan amide. The propeptide occupies S139–I146. Tryptophan amide is present on residues W151 and W158. Residues S162–I196 constitute a propeptide that is removed on maturation.

Expressed in cerebral, pedal and visceral ganglia. TPGW-amide is found in pedal and cerebral ganglia and in shell adductor muscle (at protein level). RPGW-amide and KPGW-amide are found in pedal retractor muscle, ABRM and shell adductor muscle (at protein level).

Functionally, RPGW-amide, KPGW-amide and TPGW-amide tetrapeptides are involved in control of muscle contraction and may function as neurotransmitters. These peptides increase tension of the pedal retractor muscle and, in conjunction with FMRF-amide, increase peak tension of the anterior byssus retractor muscle (ABRM). The sequence is that of APGW-amide-related neuropeptide from Mytilus edulis (Blue mussel).